The sequence spans 389 residues: Choline/ethanolaminephosphotransferase 1 (389 aa).

A helical membrane pass occupies residues 40–60; it reads VFPLWMPPNMITLMGFMFLVT. Residue Asn-48 coordinates CDP-choline. Residues Asp-95 and Asp-98 each coordinate Mg(2+). Arg-103 is a CDP-choline binding site. Asp-116 is a binding site for Mg(2+). His-117 acts as the Proton acceptor in catalysis. Residue Asp-120 participates in Mg(2+) binding. Transmembrane regions (helical) follow at residues 141 to 161, 176 to 196, 221 to 241, 252 to 272, 280 to 300, 322 to 344, and 350 to 370; these read TFWFWVISAIPFYGATWEHYF, GLALIFVSHFFTAIVGAEWWA, VLYMMIAFAVIPTVAFNVTNV, MVLALAMLYPFVVLLGGVLIW, LIATYPHLVVLGTGLAFGFLV, SLLYLPFALANALTARLNAGVPL, and VLLGYCIFTVSLYLHFATSVI.

The protein belongs to the CDP-alcohol phosphatidyltransferase class-I family. Mg(2+) is required as a cofactor. The cofactor is Mn(2+).

The protein resides in the membrane. It catalyses the reaction CDP-ethanolamine + a 1,2-diacyl-sn-glycerol = a 1,2-diacyl-sn-glycero-3-phosphoethanolamine + CMP + H(+). The enzyme catalyses CDP-choline + a 1,2-diacyl-sn-glycerol = a 1,2-diacyl-sn-glycero-3-phosphocholine + CMP + H(+). It participates in phospholipid metabolism; phosphatidylethanolamine biosynthesis; phosphatidylethanolamine from ethanolamine: step 3/3. It functions in the pathway phospholipid metabolism; phosphatidylcholine biosynthesis; phosphatidylcholine from phosphocholine: step 2/2. Its function is as follows. Catalyzes both phosphatidylcholine and phosphatidylethanolamine biosynthesis from CDP-choline and CDP-ethanolamine, respectively. Has a higher cholinephosphotransferase activity than ethanolaminephosphotransferase activity. This is Choline/ethanolaminephosphotransferase 1 (AAPT1) from Arabidopsis thaliana (Mouse-ear cress).